The sequence spans 186 residues: ATP synthase subunit b (186 aa).

A helical transmembrane segment spans residues 25 to 45 (IVWSVVCVAIIAVVFYKYVIP).

Belongs to the ATPase B chain family. F-type ATPases have 2 components, F(1) - the catalytic core - and F(0) - the membrane proton channel. F(1) has five subunits: alpha(3), beta(3), gamma(1), delta(1), epsilon(1). F(0) has three main subunits: a(1), b(2) and c(10-14). The alpha and beta chains form an alternating ring which encloses part of the gamma chain. F(1) is attached to F(0) by a central stalk formed by the gamma and epsilon chains, while a peripheral stalk is formed by the delta and b chains.

It is found in the cell membrane. In terms of biological role, f(1)F(0) ATP synthase produces ATP from ADP in the presence of a proton or sodium gradient. F-type ATPases consist of two structural domains, F(1) containing the extramembraneous catalytic core and F(0) containing the membrane proton channel, linked together by a central stalk and a peripheral stalk. During catalysis, ATP synthesis in the catalytic domain of F(1) is coupled via a rotary mechanism of the central stalk subunits to proton translocation. Component of the F(0) channel, it forms part of the peripheral stalk, linking F(1) to F(0). This is ATP synthase subunit b from Nocardia farcinica (strain IFM 10152).